A 131-amino-acid chain; its full sequence is Holo-[acyl-carrier-protein] synthase (131 aa).

Residues aspartate 8 and glutamate 59 each coordinate Mg(2+).

This sequence belongs to the P-Pant transferase superfamily. AcpS family. The cofactor is Mg(2+).

It is found in the cytoplasm. It catalyses the reaction apo-[ACP] + CoA = holo-[ACP] + adenosine 3',5'-bisphosphate + H(+). Functionally, transfers the 4'-phosphopantetheine moiety from coenzyme A to a Ser of acyl-carrier-protein. The polypeptide is Holo-[acyl-carrier-protein] synthase (Paramagnetospirillum magneticum (strain ATCC 700264 / AMB-1) (Magnetospirillum magneticum)).